A 527-amino-acid polypeptide reads, in one-letter code: Bacillolysin (527 aa).

The signal sequence occupies residues 1–28 (MKKSYLATSLTLSIAVGVSGFTSVPAFA). Residues 29–223 (KTKIDYHKQW…VINKYNMLDH (195 aa)) constitute a propeptide, activation peptide. 3 residues coordinate Ca(2+): Asp276, Asp278, and Asp354. His358 lines the Zn(2+) pocket. The active site involves Glu359. Residues His362 and Glu382 each coordinate Zn(2+). The Ca(2+) site is built by Asp393, Asn394, Asp396, Glu401, Tyr404, Thr405, and Asp411. The active-site Proton donor is His442.

The protein belongs to the peptidase M4 family. Requires Ca(2+) as cofactor. The cofactor is Zn(2+).

The protein resides in the secreted. It carries out the reaction Similar, but not identical, to that of thermolysin.. In terms of biological role, extracellular zinc metalloprotease. The chain is Bacillolysin (npr) from Brevibacillus brevis (Bacillus brevis).